Consider the following 129-residue polypeptide: Endocuticle structural glycoprotein SgAbd-9 (129 aa).

At Gln1 the chain carries Pyrrolidone carboxylic acid. The region spanning 28–98 (DGSYTFSYES…VGNVVAPAIS (71 aa)) is the Chitin-binding type R&amp;R domain. Thr120 is a glycosylation site (O-linked (HexNAc...) threonine).

Its function is as follows. Component of the abdominal endocuticle. This is Endocuticle structural glycoprotein SgAbd-9 from Schistocerca gregaria (Desert locust).